We begin with the raw amino-acid sequence, 307 residues long: MTDSSYDAQAVRSWLQGLQTHIADTLGAFDGTPFATDAWQRAPGEKLRGGGYTRILEGGKFFERAGIGFSDVAGDALPGSASAARPQLAGRGFEAMGVSLVLHPHNPHCPTVHMNVRLLIATKPGEEPVFWFGGGMDLTPYYGYEEDARHFHRTCRDALQPYGADLYPSFKRWCDEYFFLKHRNEARGIGGIFFDDFSAPGFDQSFAMLKSVGDAFLKAYLPIVEKRRNIPYGQAERDFQAYRRGRYVEFNLVFDRGTLFGLQSGGRTESILMSMPPVVNWRYNWHPEPGTPEARLYSDFLVPREWV.

S99 contributes to the substrate binding site. Residues H103 and H113 each contribute to the a divalent metal cation site. The Proton donor role is filled by H113. 115 to 117 (NVR) lines the substrate pocket. The a divalent metal cation site is built by H152 and H182. Residues 247–282 (YVEFNLVFDRGTLFGLQSGGRTESILMSMPPVVNWR) are important for dimerization. 265–267 (GGR) provides a ligand contact to substrate.

The protein belongs to the aerobic coproporphyrinogen-III oxidase family. Homodimer. Requires a divalent metal cation as cofactor.

It is found in the cytoplasm. It catalyses the reaction coproporphyrinogen III + O2 + 2 H(+) = protoporphyrinogen IX + 2 CO2 + 2 H2O. It participates in porphyrin-containing compound metabolism; protoporphyrin-IX biosynthesis; protoporphyrinogen-IX from coproporphyrinogen-III (O2 route): step 1/1. In terms of biological role, involved in the heme biosynthesis. Catalyzes the aerobic oxidative decarboxylation of propionate groups of rings A and B of coproporphyrinogen-III to yield the vinyl groups in protoporphyrinogen-IX. This is Oxygen-dependent coproporphyrinogen-III oxidase from Paraburkholderia phytofirmans (strain DSM 17436 / LMG 22146 / PsJN) (Burkholderia phytofirmans).